The following is a 125-amino-acid chain: Glycine cleavage system H protein (125 aa).

In terms of domain architecture, Lipoyl-binding spans 19 to 101; that stretch reads GAVVGITDFA…NGSGWFFKLT (83 aa). Lys-60 bears the N6-lipoyllysine mark.

This sequence belongs to the GcvH family. As to quaternary structure, the glycine cleavage system is composed of four proteins: P, T, L and H. The cofactor is (R)-lipoate.

In terms of biological role, the glycine cleavage system catalyzes the degradation of glycine. The H protein shuttles the methylamine group of glycine from the P protein to the T protein. This is Glycine cleavage system H protein from Methylocella silvestris (strain DSM 15510 / CIP 108128 / LMG 27833 / NCIMB 13906 / BL2).